Reading from the N-terminus, the 363-residue chain is MSPKNITRSVIPAIDLYCRKANFKTLKSLSMILGSKKEWYDTKKAPLRTFLVSRCGIFEQLRGRLVEDGKVNLFSVFLTNDSFSFCKMTVDDKFNTSLVDWQKIPFDSTFATDRRQNISLLPVDTLFATEKIISILGVSPNMTNLVSIERERSDLVDFNCKLQSNILEHLLYAKCQGVYVTSTNEKARLLAAVCNPEFIDTFWCELTPIRVSLKENPSISVPREYQMYDPVVRATIKEVVTKRLLRSAFDNDIDPLMCLHLDKGWKLKFPILSSTTGLNFSLKDCLSLDTGKDASDMTEVFLATMESSKVLRTYSNLVDIVMKDNGRLDSGVLKQFNDYVKQEKLNLQHFQAGSSKFLKGAKI.

Homodimer. Forms a ribonucleoprotein complex composed of maturase bI3 and 2 dimers of MRS1 that assemble around the bI3 RNA.

It localises to the mitochondrion matrix. In terms of biological role, function in mitochondrial RNA splicing in the excision of mitochondrial group I introns aI5 beta from COX1 and bI3 from COB transcripts and thus would be involved in obtaining the correct structure of the intron, to allow the RNA catalyzed reactions to occur. This Saccharomyces cerevisiae (strain ATCC 204508 / S288c) (Baker's yeast) protein is Mitochondrial RNA-splicing protein MRS1 (MRS1).